Reading from the N-terminus, the 433-residue chain is MTATWEKKEGNEGLLTVTVPAEKVNKALDQAFKKVVKQINVPGFRKGKVPRPIFEQRFGVEALYQDAIDILLPDAYGEAIDETDIKPVAQPEVSVTQIEKGKDFIFEATVTVEPEVKLGDYKGLEIEKQETELSDDELQEAIDHSLGHLAEMVVKEDGVVENGDTVNIDFSGSVDGEEFEGGQAEGYDLEIGSGSFIPGFEEQLEGMKVDEEKDVVVTFPEEYHAEELAGKEATFKTKVNEIKFKEVPELTDEIANELDAEANTVDEYKENLRKRLAEQKATDAENVEKEEAITKATDNTTIDIPEAMVNTELDRMVSEFAQRIQQQGLDLQTYFQISGQDETQLREQMKDDAEQRVKTNLTLTAIAEAEKIEATDEDIDKELEKMSKQFNISVEDIKNTLGNTDIIKNDVRIQKVIDLLRDNAKFVEGTKED.

The region spanning 163–248 (GDTVNIDFSG…VNEIKFKEVP (86 aa)) is the PPIase FKBP-type domain.

Belongs to the FKBP-type PPIase family. Tig subfamily.

It localises to the cytoplasm. The enzyme catalyses [protein]-peptidylproline (omega=180) = [protein]-peptidylproline (omega=0). Involved in protein export. Acts as a chaperone by maintaining the newly synthesized protein in an open conformation. Functions as a peptidyl-prolyl cis-trans isomerase. In Staphylococcus aureus (strain COL), this protein is Trigger factor.